Here is a 247-residue protein sequence, read N- to C-terminus: 1-(5-phosphoribosyl)-5-[(5-phosphoribosylamino)methylideneamino] imidazole-4-carboxamide isomerase (247 aa).

D8 acts as the Proton acceptor in catalysis. The Proton donor role is filled by D131.

It belongs to the HisA/HisF family.

The protein localises to the cytoplasm. The catalysed reaction is 1-(5-phospho-beta-D-ribosyl)-5-[(5-phospho-beta-D-ribosylamino)methylideneamino]imidazole-4-carboxamide = 5-[(5-phospho-1-deoxy-D-ribulos-1-ylimino)methylamino]-1-(5-phospho-beta-D-ribosyl)imidazole-4-carboxamide. Its pathway is amino-acid biosynthesis; L-histidine biosynthesis; L-histidine from 5-phospho-alpha-D-ribose 1-diphosphate: step 4/9. The chain is 1-(5-phosphoribosyl)-5-[(5-phosphoribosylamino)methylideneamino] imidazole-4-carboxamide isomerase from Acidovorax sp. (strain JS42).